The following is a 457-amino-acid chain: Glutamyl-tRNA reductase (457 aa).

Residues 49 to 52 (TCNR), serine 109, 114 to 116 (ETQ), and glutamine 120 each bind substrate. The active-site Nucleophile is cysteine 50. An NADP(+)-binding site is contributed by 189–194 (GAGKMG).

It belongs to the glutamyl-tRNA reductase family. Homodimer.

The enzyme catalyses (S)-4-amino-5-oxopentanoate + tRNA(Glu) + NADP(+) = L-glutamyl-tRNA(Glu) + NADPH + H(+). It functions in the pathway porphyrin-containing compound metabolism; protoporphyrin-IX biosynthesis; 5-aminolevulinate from L-glutamyl-tRNA(Glu): step 1/2. Catalyzes the NADPH-dependent reduction of glutamyl-tRNA(Glu) to glutamate 1-semialdehyde (GSA). The sequence is that of Glutamyl-tRNA reductase from Oceanobacillus iheyensis (strain DSM 14371 / CIP 107618 / JCM 11309 / KCTC 3954 / HTE831).